A 642-amino-acid chain; its full sequence is Tigger transposable element derived 5 (642 aa).

Residues 1 to 54 are disordered; sequence MYPASPSAGPALHPVPHRARLPRPRCLAEPPRSPAPGPGSTARPPPPAPGPRPR. The span at 31–52 shows a compositional bias: pro residues; it reads PRSPAPGPGSTARPPPPAPGPR. The 52-residue stretch at 56–107 folds into the HTH psq-type domain; it reads AVKMTFRKAYSIKDKLQAIERVKGGERQASVCRDFGVPGGTLRGWLKDEPKL. DNA-binding regions (H-T-H motif) lie at residues 83-103 and 154-187; these read QASV…WLKD and PVIQ…WQKR. An HTH CENPB-type domain is found at 121–194; sequence QRKKMRLANE…QKRHGISSQR (74 aa). Positions 198 to 208 are enriched in low complexity; that stretch reads EAEPPVAGPAP. Positions 198 to 230 are disordered; that stretch reads EAEPPVAGPAPVKEEPAQPSSAGLLLDGTPATL. Residues 239–364 enclose the DDE-1 domain; that stretch reads DEQIYNANVT…CLQQKAVLLV (126 aa). A disordered region spans residues 543 to 583; it reads GLPEGCGEEVAPAAPPSPASLPSSIGAGEEEEEEATEQGGV.

This sequence belongs to the tigger transposable element derived protein family.

The protein localises to the nucleus. The protein is Tigger transposable element derived 5 (Tigd5) of Rattus norvegicus (Rat).